A 470-amino-acid polypeptide reads, in one-letter code: Glutamate--tRNA ligase (470 aa).

Residues 9-19 (PSPTGFLHVGG) carry the 'HIGH' region motif. The 'KMSKS' region motif lies at 236–240 (RLSKR). Residue Lys-239 coordinates ATP.

The protein belongs to the class-I aminoacyl-tRNA synthetase family. Glutamate--tRNA ligase type 1 subfamily. As to quaternary structure, monomer.

It is found in the cytoplasm. The enzyme catalyses tRNA(Glu) + L-glutamate + ATP = L-glutamyl-tRNA(Glu) + AMP + diphosphate. In terms of biological role, catalyzes the attachment of glutamate to tRNA(Glu) in a two-step reaction: glutamate is first activated by ATP to form Glu-AMP and then transferred to the acceptor end of tRNA(Glu). This Legionella pneumophila (strain Paris) protein is Glutamate--tRNA ligase.